Consider the following 313-residue polypeptide: Methionyl-tRNA formyltransferase (313 aa).

112–115 (SLLP) is a (6S)-5,6,7,8-tetrahydrofolate binding site.

It belongs to the Fmt family.

It carries out the reaction L-methionyl-tRNA(fMet) + (6R)-10-formyltetrahydrofolate = N-formyl-L-methionyl-tRNA(fMet) + (6S)-5,6,7,8-tetrahydrofolate + H(+). In terms of biological role, attaches a formyl group to the free amino group of methionyl-tRNA(fMet). The formyl group appears to play a dual role in the initiator identity of N-formylmethionyl-tRNA by promoting its recognition by IF2 and preventing the misappropriation of this tRNA by the elongation apparatus. The polypeptide is Methionyl-tRNA formyltransferase (Roseiflexus castenholzii (strain DSM 13941 / HLO8)).